The primary structure comprises 541 residues: Glucose-6-phosphate isomerase (541 aa).

Catalysis depends on Glu346, which acts as the Proton donor. Catalysis depends on residues His377 and Lys506.

This sequence belongs to the GPI family.

It localises to the cytoplasm. It catalyses the reaction alpha-D-glucose 6-phosphate = beta-D-fructose 6-phosphate. The protein operates within carbohydrate biosynthesis; gluconeogenesis. It functions in the pathway carbohydrate degradation; glycolysis; D-glyceraldehyde 3-phosphate and glycerone phosphate from D-glucose: step 2/4. Its function is as follows. Catalyzes the reversible isomerization of glucose-6-phosphate to fructose-6-phosphate. This is Glucose-6-phosphate isomerase from Rhizobium leguminosarum bv. trifolii (strain WSM2304).